A 403-amino-acid chain; its full sequence is Probable eukaryotic initiation factor 4A (403 aa).

Positions 1–29 (MSQQDRVAPQDQDSFLDDQPGVRPIPSFD) are disordered. The Q motif signature appears at 26–54 (PSFDDMPLHQNLLRGIYSYGFEKPSSIQQ). The Helicase ATP-binding domain occupies 57–230 (IAPFTRGGDI…KKFMRDPVRI (174 aa)). Residue 70-77 (AQSGTGKT) coordinates ATP. Residues 178 to 181 (DEAD) carry the DEAD box motif. Positions 241-401 (GIKQFFIAVE…ELPVDFAAYL (161 aa)) constitute a Helicase C-terminal domain.

The protein belongs to the DEAD box helicase family. eIF4A subfamily. In terms of assembly, eIF4F is a multi-subunit complex, the composition of which varies with external and internal environmental conditions. It is composed of at least EIF4A, EIF4E and EIF4G.

It catalyses the reaction ATP + H2O = ADP + phosphate + H(+). Its function is as follows. ATP-dependent RNA helicase which is a subunit of the eIF4F complex involved in cap recognition and is required for mRNA binding to ribosome. In the current model of translation initiation, eIF4A unwinds RNA secondary structures in the 5'-UTR of mRNAs which is necessary to allow efficient binding of the small ribosomal subunit, and subsequent scanning for the initiator codon. This Leishmania braziliensis protein is Probable eukaryotic initiation factor 4A.